A 341-amino-acid chain; its full sequence is S-adenosylmethionine:tRNA ribosyltransferase-isomerase (341 aa).

Belongs to the QueA family. In terms of assembly, monomer.

The protein localises to the cytoplasm. The enzyme catalyses 7-aminomethyl-7-carbaguanosine(34) in tRNA + S-adenosyl-L-methionine = epoxyqueuosine(34) in tRNA + adenine + L-methionine + 2 H(+). It participates in tRNA modification; tRNA-queuosine biosynthesis. In terms of biological role, transfers and isomerizes the ribose moiety from AdoMet to the 7-aminomethyl group of 7-deazaguanine (preQ1-tRNA) to give epoxyqueuosine (oQ-tRNA). This Clostridium kluyveri (strain NBRC 12016) protein is S-adenosylmethionine:tRNA ribosyltransferase-isomerase.